The chain runs to 76 residues: Large ribosomal subunit protein uL29 (76 aa).

Belongs to the universal ribosomal protein uL29 family.

The protein is Large ribosomal subunit protein uL29 of Corynebacterium diphtheriae (strain ATCC 700971 / NCTC 13129 / Biotype gravis).